The primary structure comprises 664 residues: MTEDHAVVRSDGGLSRRSFAAVAGTATVATALTSGVAAALPAPAASGDSRGADFDRCLAVARALLVLDSDDRPLVPRYQSVLQKGLPAQRRTRPKNVLVIGAGPAGLVAAWLLKRAGHRVTVLEANGNRAGGRVKTFRSGGHERAEQPFADPRQYAEAGAMRIPGSHPLVMELIDQFELKKRRFHYVDVDSEGRPANRTWIHVNGIRVRRADYARAPRRVNRSFGVPRAHWDTPAAAILRSVLDPVRDEFSRVGRDGKRVDKPLPERLQGWARVVQRFGDWSMFRFLTEHAGLDERTIDLIGTLENLTSRLPLSFIHSFIGSSLISPDTPFYELEGGTAVLPDALLERVRKDVRFDRRVTRIQYHHPDRPSPDVEQVRSKGPHVWVDTVSEGRDGPVVREQFTADVAVVTVPFSGLRHVQIAPPLSYGKRRAVCELHYDSATKVLLEFSRRWWEFDEADWKRELRAVDPGLYDAYRTGRAAADGSLLGAHPSVPAGHITAGQRTHYAANRAVARDQPEAVDVVGGGSVSDNANRFMFHPSHPVPGSAGGVVLASYSWADDALRWDSLDDEARYPHALCGLQQVYGQRIEVFYTGAGRTQSWLRDPYAYGEASVLLPGQHTELLSAIPVAEGPLHFAGDHTSVKPAWIEGAVESAVRAALEIHTA.

Positions 1-44 (MTEDHAVVRSDGGLSRRSFAAVAGTATVATALTSGVAAALPAPA) form a signal peptide, tat-type signal. Residues Ala105, Glu124, Ala125, Arg133, Met161, Arg162, Asp638, Trp646, and Ile647 each coordinate FAD.

Belongs to the flavin monoamine oxidase family. LGOX subfamily. In terms of assembly, the mature enzyme is a heterohexamer composed of 2 alpha chains, 2 beta chains and 2 gamma chains (alpha2beta2gamma2). FAD is required as a cofactor. In terms of processing, predicted to be exported by the Tat system. The position of the signal peptide cleavage has not been experimentally proven. Post-translationally, the precursor form is proteolytically cleaved by an endopeptidase into alpha, beta and gamma chains, which form the stable mature enzyme.

The protein localises to the secreted. It catalyses the reaction L-glutamate + O2 + H2O = H2O2 + 2-oxoglutarate + NH4(+). With respect to regulation, activity is stimulated in the presence of Mn(2+), Ca(2+) or Mg(2+). Its function is as follows. Catalyzes the oxidative deamination of L-glutamate to 2-ketoglutarate along with the production of ammonia and hydrogen peroxide. This is L-glutamate oxidase precursor from Streptomyces viridosporus (strain ATCC 14672 / DSM 40746 / JCM 4963 / KCTC 9882 / NRRL B-12104 / FH 1290) (Streptomyces ghanaensis).